The following is a 359-amino-acid chain: Protein RecA (359 aa).

Position 69–76 (Gly69–Thr76) interacts with ATP. Residues Ser337–Glu359 are disordered. Positions Glu346–Glu359 are enriched in acidic residues.

It belongs to the RecA family.

It is found in the cytoplasm. Its function is as follows. Can catalyze the hydrolysis of ATP in the presence of single-stranded DNA, the ATP-dependent uptake of single-stranded DNA by duplex DNA, and the ATP-dependent hybridization of homologous single-stranded DNAs. It interacts with LexA causing its activation and leading to its autocatalytic cleavage. The polypeptide is Protein RecA (Nostoc punctiforme (strain ATCC 29133 / PCC 73102)).